A 430-amino-acid polypeptide reads, in one-letter code: Adenylosuccinate synthetase (430 aa).

Residues 12–18 and 40–42 each bind GTP; these read GDEGKGK and GHT. Asp13 (proton acceptor) is an active-site residue. Mg(2+)-binding residues include Asp13 and Gly40. Residues 13–16, 38–41, Thr128, Arg142, Gln223, Thr238, and Arg302 contribute to the IMP site; these read DEGK and NAGH. The Proton donor role is filled by His41. 298–304 contacts substrate; the sequence is TTTGRPR. Residues Arg304, 330 to 332, and 412 to 414 contribute to the GTP site; these read SID and SVG.

Belongs to the adenylosuccinate synthetase family. In terms of assembly, homodimer. Requires Mg(2+) as cofactor.

It localises to the cytoplasm. It carries out the reaction IMP + L-aspartate + GTP = N(6)-(1,2-dicarboxyethyl)-AMP + GDP + phosphate + 2 H(+). It functions in the pathway purine metabolism; AMP biosynthesis via de novo pathway; AMP from IMP: step 1/2. Plays an important role in the de novo pathway of purine nucleotide biosynthesis. Catalyzes the first committed step in the biosynthesis of AMP from IMP. The chain is Adenylosuccinate synthetase from Streptococcus gordonii (strain Challis / ATCC 35105 / BCRC 15272 / CH1 / DL1 / V288).